Consider the following 966-residue polypeptide: Alanine--tRNA ligase, cytoplasmic (966 aa).

His-604, His-608, Cys-723, and His-727 together coordinate Zn(2+).

Belongs to the class-II aminoacyl-tRNA synthetase family. In terms of assembly, monomer. Requires Zn(2+) as cofactor.

The protein localises to the cytoplasm. It catalyses the reaction tRNA(Ala) + L-alanine + ATP = L-alanyl-tRNA(Ala) + AMP + diphosphate. In terms of biological role, catalyzes the attachment of alanine to tRNA(Ala) in a two-step reaction: alanine is first activated by ATP to form Ala-AMP and then transferred to the acceptor end of tRNA(Ala). Also edits incorrectly charged tRNA(Ala) via its editing domain. This is Alanine--tRNA ligase, cytoplasmic from Drosophila melanogaster (Fruit fly).